Consider the following 37-residue polypeptide: Large ribosomal subunit protein bL36c (37 aa).

It belongs to the bacterial ribosomal protein bL36 family.

It localises to the plastid. The protein localises to the chloroplast. This is Large ribosomal subunit protein bL36c from Phaseolus angularis (Azuki bean).